The sequence spans 314 residues: Putative S-adenosyl-L-methionine-dependent methyltransferase MAB_3886c (314 aa).

S-adenosyl-L-methionine contacts are provided by residues Asp-133 and 162-163 (DL).

The protein belongs to the UPF0677 family.

Its function is as follows. Exhibits S-adenosyl-L-methionine-dependent methyltransferase activity. This chain is Putative S-adenosyl-L-methionine-dependent methyltransferase MAB_3886c, found in Mycobacteroides abscessus (strain ATCC 19977 / DSM 44196 / CCUG 20993 / CIP 104536 / JCM 13569 / NCTC 13031 / TMC 1543 / L948) (Mycobacterium abscessus).